A 944-amino-acid chain; its full sequence is Serine/threonine-protein kinase ATG1 (944 aa).

The Protein kinase domain occupies 24–327 (FNIGSEIGKG…FENFFTHQVV (304 aa)). ATP contacts are provided by residues 30-38 (IGKGSFAQV) and K53. D167 acts as the Proton acceptor in catalysis. The disordered stretch occupies residues 344 to 423 (RQESRDPRSA…NSPREGGEGL (80 aa)). Over residues 356 to 367 (SGSPSLSSRSPR) the composition is skewed to low complexity. The LIR motif lies at 428 to 431 (PVAQ). Disordered stretches follow at residues 443-475 (YDSV…PITE), 512-572 (LGDA…GSAS), 777-801 (QLPD…AGSP), 860-895 (EGSG…EEAH), and 925-944 (AVRR…HASS). 2 stretches are compositionally biased toward polar residues: residues 447–459 (TGRN…TSLL) and 516–549 (SQRS…NALA). Over residues 563–572 (SLSASPGSAS) the composition is skewed to low complexity. Positions 785–801 (HPSNHGTESIASSAGSP) are enriched in polar residues. The segment covering 865-881 (ETRRLSTGKEAEREAVK) has biased composition (basic and acidic residues). Residues 924–930 (QAVRRRS) form a required for Cvt trafficking region.

This sequence belongs to the protein kinase superfamily. Ser/Thr protein kinase family. APG1/unc-51/ULK1 subfamily. As to quaternary structure, homodimer. Dimerization requires the presence of ATG13. Forms a ternary complex with ATG13 and ATG17.

The protein localises to the cytoplasm. Its subcellular location is the preautophagosomal structure membrane. The enzyme catalyses L-seryl-[protein] + ATP = O-phospho-L-seryl-[protein] + ADP + H(+). The catalysed reaction is L-threonyl-[protein] + ATP = O-phospho-L-threonyl-[protein] + ADP + H(+). Its function is as follows. Serine/threonine protein kinase involved in the cytoplasm to vacuole transport (Cvt) and found to be essential in autophagy, where it is required for the formation of autophagosomes. Involved in the clearance of protein aggregates which cannot be efficiently cleared by the proteasome. Required for selective autophagic degradation of the nucleus (nucleophagy) as well as for mitophagy which contributes to regulate mitochondrial quantity and quality by eliminating the mitochondria to a basal level to fulfill cellular energy requirements and preventing excess ROS production. Also involved in endoplasmic reticulum-specific autophagic process, in selective removal of ER-associated degradation (ERAD) substrates. Plays a key role in ATG9 and ATG23 cycling through the pre-autophagosomal structure and is necessary to promote ATG18 binding to ATG9 through phosphorylation of ATG9. Catalyzes phosphorylation of ATG4, decreasing the interaction between ATG4 and ATG8 and impairing deconjugation of PE-conjugated forms of ATG8. Autophagy is required for proper vegetative growth, asexual/sexual reproduction, and full virulence. Autophagy is particularly involved in the biosynthesis of deoxynivalenol (DON), an important virulence determinant. The sequence is that of Serine/threonine-protein kinase ATG1 from Gibberella zeae (strain ATCC MYA-4620 / CBS 123657 / FGSC 9075 / NRRL 31084 / PH-1) (Wheat head blight fungus).